Consider the following 701-residue polypeptide: MTTDTARRHTGAERANEMTYEQLARELLLVGPAPTNEDLKLRYLDVLIDNGLNPPGPPKRILIVGAGIAGLVAGDLLTRAGHDVTILEANANRVGGRIKTFHAKKGEPSPFADPAQYAEAGAMRLPSFHPLTLALIDKLGLKRRLFFNVDIDPQTGNQDAPVPPVFYKSFKDGKTWTNGAPSPEFKEPDKRNHTWIRTNREQVRRAQYATDPSSINEGFHLTGCETRLTVSDMVNQALEPVRDYYSVKQDDGTRVNKPFKEWLAGWADVVRDFDGYSMGRFLREYAEFSDEAVEAIGTIENMTSRLHLAFFHSFLGRSDIDPRATYWEIEGGSRMLPETLAKDLRDQIVMGQRMVRLEYYDPGRDGHHGELTGPGGPAVAIQTVPEGEPYAATQTWTGDLAIVTIPFSSLRFVKVTPPFSYKKRRAVIETHYDQATKVLLEFSRRWWEFTEADWKRELDAIAPGLYDYYQQWGEDDAEAALALPQSVRNLPTGLLGAHPSVDESRIGEEQVEYYRNSELRGGVRPATNAYGGGSTTDNPNRFMYYPSHPVPGTQGGVVLAAYSWSDDAARWDSFDDAERYGYALENLQSVHGRRIEVFYTGAGQTQSWLRDPYACGEAAVYTPHQMTAFHLDVVRPEGPVYFAGEHVSLKHAWIEGAVETAVRAAIAVNEAPVGDTGVTAAAGRRGAAAATEPMREEALTS.

The first 14 residues, 1 to 14 (MTTDTARRHTGAER), serve as a signal peptide directing secretion. A69, E88, A89, R97, M123, R124, M354, and S409 together coordinate FAD. The propeptide occupies 481–520 (LALPQSVRNLPTGLLGAHPSVDESRIGEEQVEYYRNSELR). FAD is bound by residues E645, W653, and I654. Positions 684 to 701 (RRGAAAATEPMREEALTS) are excised as a propeptide.

The protein belongs to the flavin monoamine oxidase family. LGOX subfamily. As to quaternary structure, the LGOX precursor forms homodimers. The mature enzyme is a heterohexamer composed of 2 alpha chains, 2 beta chains and 2 gamma chains (alpha2beta2gamma2). The cofactor is FAD. Post-translationally, the precursor form is proteolytically cleaved by an endopeptidase into alpha, beta and gamma chains, which form the stable mature enzyme. Activation by proteolysis occurs after secretion.

It localises to the secreted. It carries out the reaction L-glutamate + O2 + H2O = H2O2 + 2-oxoglutarate + NH4(+). Produced as a single polypeptide precursor and is activated by proteolytic cleavage. The LGOX precursor is an active enzyme, but it exhibits lower catalytic efficiency and lower thermostability compared with the mature hexameric LGOX. The mature form is strongly inhibited by p-chloromercuribenzoate, but not by CuCl(2), EDTA and diethyldithiocarbamate. Its function is as follows. Catalyzes the oxidative deamination of L-glutamate to 2-ketoglutarate along with the production of ammonia and hydrogen peroxide. Shows strict substrate specificity for L-glutamate, and exhibits only very weak activity with L-aspartate. The polypeptide is L-glutamate oxidase precursor (Streptomyces sp).